Here is a 202-residue protein sequence, read N- to C-terminus: Probable nicotinate-nucleotide adenylyltransferase (202 aa).

The protein belongs to the NadD family.

The enzyme catalyses nicotinate beta-D-ribonucleotide + ATP + H(+) = deamido-NAD(+) + diphosphate. It functions in the pathway cofactor biosynthesis; NAD(+) biosynthesis; deamido-NAD(+) from nicotinate D-ribonucleotide: step 1/1. Its function is as follows. Catalyzes the reversible adenylation of nicotinate mononucleotide (NaMN) to nicotinic acid adenine dinucleotide (NaAD). This Clostridium perfringens (strain SM101 / Type A) protein is Probable nicotinate-nucleotide adenylyltransferase.